Reading from the N-terminus, the 448-residue chain is Adenylosuccinate synthetase (448 aa).

GTP is bound by residues 36–42 and 64–66; these read GDEGKGK and GHT. D37 acts as the Proton acceptor in catalysis. D37 and G64 together coordinate Mg(2+). Residues 37–40, 62–65, T154, R168, N246, T261, and R325 contribute to the IMP site; these read DEGK and NAGH. H65 functions as the Proton donor in the catalytic mechanism. Residue 321–327 coordinates substrate; sequence VTTKRKR. Residues R327, 353–355, and 436–438 each bind GTP; these read KLD and GVG.

The protein belongs to the adenylosuccinate synthetase family. In terms of assembly, homodimer. It depends on Mg(2+) as a cofactor.

It localises to the cytoplasm. The enzyme catalyses IMP + L-aspartate + GTP = N(6)-(1,2-dicarboxyethyl)-AMP + GDP + phosphate + 2 H(+). It functions in the pathway purine metabolism; AMP biosynthesis via de novo pathway; AMP from IMP: step 1/2. Plays an important role in the de novo pathway and in the salvage pathway of purine nucleotide biosynthesis. Catalyzes the first committed step in the biosynthesis of AMP from IMP. In Drosophila mojavensis (Fruit fly), this protein is Adenylosuccinate synthetase.